Here is a 512-residue protein sequence, read N- to C-terminus: MQLKASEVYEALKKQLEDFDELSELSEVGYVISIGDGIAKVYGLSNAYSGEILQFSTGTKGIVFSLKDNLIEAVVIGSDDQIKQGSQVKRTQTSLKVPTGKELLGRVVDAVGNPIDGKGEFINPTYLDVEVKAPSVMCRDSVNEPMYTGIKAIDALIPIGKGQRELIIGDRQTGKTAIAIDIILNQKRFHLSDQEREKVYCIYVAIGQKRSTVAQLVKKLQETGAMAYTTVVLSSASDAASLQYLAPYTGCAIGEYFRDNGMHALVIYDDLSKHAIAYRQISLLLRRPPAREAYPGDVFYLHSRLLERAAKLNKAKGEGSLTALPIVETQNSDVSAYIPTNIISITDGQIFLESELFYKGTKPALNVGISVSRVGAAAQIKAMKDIAGTVKLELAQYHEMEAFSQFGADLDSSSMQLINRGRRLSELLKQSQYCPFSVEEQIIVLFAGINGYLDKVAVSKVKEFESNMLEHFRIHNPDIMNEIISTKKITEIISSKLHQILQEFVKSIEQYS.

Gly169–Thr176 contacts ATP.

Belongs to the ATPase alpha/beta chains family. F-type ATPases have 2 components, CF(1) - the catalytic core - and CF(0) - the membrane proton channel. CF(1) has five subunits: alpha(3), beta(3), gamma(1), delta(1), epsilon(1). CF(0) has three main subunits: a(1), b(2) and c(9-12). The alpha and beta chains form an alternating ring which encloses part of the gamma chain. CF(1) is attached to CF(0) by a central stalk formed by the gamma and epsilon chains, while a peripheral stalk is formed by the delta and b chains.

The protein resides in the cell inner membrane. It catalyses the reaction ATP + H2O + 4 H(+)(in) = ADP + phosphate + 5 H(+)(out). Functionally, produces ATP from ADP in the presence of a proton gradient across the membrane. The alpha chain is a regulatory subunit. This Orientia tsutsugamushi (strain Ikeda) (Rickettsia tsutsugamushi) protein is ATP synthase subunit alpha.